A 1954-amino-acid polypeptide reads, in one-letter code: Protein abnormal spindle (1954 aa).

The segment at 134–155 (VKNPRKFPTVGKTLQLKSPTGA) is disordered. Phosphoserine is present on residues serine 151 and serine 360. Threonine 364 carries the phosphothreonine modification. Residues serine 388, serine 390, serine 395, serine 398, serine 491, serine 495, serine 497, serine 501, serine 504, and serine 514 each carry the phosphoserine modification. Residues 476 to 548 (KSVKGSPVKN…SSSAHAWPHA (73 aa)) form a disordered region. A compositionally biased stretch (polar residues) spans 498-507 (DAPSNESLYR). Positions 528–548 (RSAAPANASARSSSAHAWPHA) are enriched in low complexity. Residues 836 to 968 (KETKDILLRF…LLWQLIYKFR (133 aa)) enclose the Calponin-homology (CH) domain. IQ domains are found at residues 1004–1033 (RHRA…ERTQ), 1386–1415 (TQAA…QLRQ), and 1467–1496 (QREA…KQRQ). The stretch at 1614-1641 (RANRSMKQARQEFVQLRTIAVHLQQKFR) forms a coiled coil. 2 consecutive IQ domains span residues 1656-1687 (LRCS…MMDL) and 1690-1721 (QKRA…IRKR).

It localises to the cytoplasm. Its subcellular location is the nucleus. The protein resides in the cytoskeleton. The protein localises to the spindle. It is found in the microtubule organizing center. It localises to the perinuclear region. Its function is as follows. Required to maintain the structure of the centrosomal microtubule organizing center (MTOC) during mitosis. May have a preferential role in regulating neurogenesis. Required for germ cell mitosis and oocyte differentiation. The sequence is that of Protein abnormal spindle from Drosophila melanogaster (Fruit fly).